The following is a 1070-amino-acid chain: DNA-directed RNA polymerase subunit beta (1070 aa).

The protein belongs to the RNA polymerase beta chain family. In terms of assembly, in plastids the minimal PEP RNA polymerase catalytic core is composed of four subunits: alpha, beta, beta', and beta''. When a (nuclear-encoded) sigma factor is associated with the core the holoenzyme is formed, which can initiate transcription.

It is found in the plastid. Its subcellular location is the chloroplast. It carries out the reaction RNA(n) + a ribonucleoside 5'-triphosphate = RNA(n+1) + diphosphate. Functionally, DNA-dependent RNA polymerase catalyzes the transcription of DNA into RNA using the four ribonucleoside triphosphates as substrates. The chain is DNA-directed RNA polymerase subunit beta from Dioscorea elephantipes (Elephant's foot yam).